Consider the following 327-residue polypeptide: Ribosomal RNA small subunit methyltransferase H (327 aa).

S-adenosyl-L-methionine contacts are provided by residues 36 to 38, D61, F88, D114, and Q121; that span reads GGH.

This sequence belongs to the methyltransferase superfamily. RsmH family.

The protein resides in the cytoplasm. The enzyme catalyses cytidine(1402) in 16S rRNA + S-adenosyl-L-methionine = N(4)-methylcytidine(1402) in 16S rRNA + S-adenosyl-L-homocysteine + H(+). Specifically methylates the N4 position of cytidine in position 1402 (C1402) of 16S rRNA. The protein is Ribosomal RNA small subunit methyltransferase H of Chlorobium phaeovibrioides (strain DSM 265 / 1930) (Prosthecochloris vibrioformis (strain DSM 265)).